Consider the following 337-residue polypeptide: Viral cathepsin (337 aa).

The signal sequence occupies residues 1–19; that stretch reads MTLLMIFTILLVASSQIEG. The propeptide at 20 to 126 is activation peptide; that stretch reads HLKFDIHDAQ…DAPPDVHDEL (107 aa). Cystine bridges form between C147–C188, C181–C221, and C276–C324. The active site involves C150. Residue N172 is glycosylated (N-linked (GlcNAc...) asparagine; by host). Residues H283 and N303 contribute to the active site.

This sequence belongs to the peptidase C1 family. Synthesized as an inactive proenzyme and activated by proteolytic removal of the inhibitory propeptide.

It catalyses the reaction Endopeptidase of broad specificity, hydrolyzing substrates of both cathepsin L and cathepsin B.. Functionally, cysteine protease that plays an essential role in host liquefaction to facilitate horizontal transmission of the virus. May participate in the degradation of foreign protein expressed by the baculovirus system. The sequence is that of Viral cathepsin (VCATH) from Adoxophyes honmai (Smaller tea tortrix moth).